Consider the following 127-residue polypeptide: Small ribosomal subunit protein uS13 (127 aa).

Residues 90-127 (RRHRQGLPVRGQRTRTNARTRRGRRVTVAGKKKAPSKK) are disordered. Residues 101 to 127 (QRTRTNARTRRGRRVTVAGKKKAPSKK) show a composition bias toward basic residues.

The protein belongs to the universal ribosomal protein uS13 family. As to quaternary structure, part of the 30S ribosomal subunit. Forms a loose heterodimer with protein S19. Forms two bridges to the 50S subunit in the 70S ribosome.

Functionally, located at the top of the head of the 30S subunit, it contacts several helices of the 16S rRNA. In the 70S ribosome it contacts the 23S rRNA (bridge B1a) and protein L5 of the 50S subunit (bridge B1b), connecting the 2 subunits; these bridges are implicated in subunit movement. Contacts the tRNAs in the A and P-sites. In Rippkaea orientalis (strain PCC 8801 / RF-1) (Cyanothece sp. (strain PCC 8801)), this protein is Small ribosomal subunit protein uS13.